We begin with the raw amino-acid sequence, 132 residues long: Small ribosomal subunit protein uS8 (132 aa).

This sequence belongs to the universal ribosomal protein uS8 family. Part of the 30S ribosomal subunit. Contacts proteins S5 and S12.

One of the primary rRNA binding proteins, it binds directly to 16S rRNA central domain where it helps coordinate assembly of the platform of the 30S subunit. The protein is Small ribosomal subunit protein uS8 of Clostridium botulinum (strain ATCC 19397 / Type A).